A 130-amino-acid polypeptide reads, in one-letter code: uncharacterized protein (130 aa).

The helical transmembrane segment at 15–31 (LYLCPAIIRLSSVCTLA) threads the bilayer.

The protein resides in the membrane. This is an uncharacterized protein from Saccharomyces cerevisiae (strain ATCC 204508 / S288c) (Baker's yeast).